Reading from the N-terminus, the 661-residue chain is Coagulation factor XIII B chain (661 aa).

Residues 1–20 (MRLKNLTFIIILIISGELYA) form the signal peptide. 10 consecutive Sushi domains span residues 24-88 (PCGF…PRCF), 89-148 (KKCT…TCRK), 151-210 (ETCL…KCTK), 211-269 (LKCS…VCEG), 272-329 (NRCP…KCIE), 334-391 (VACE…ECVE), 394-452 (ENCK…VCLE), 453-516 (PCTV…PLCT), 522-580 (GMCT…LCLE), and 581-647 (PCTL…PRCI). Disulfide bonds link cysteine 25-cysteine 76, cysteine 59-cysteine 87, cysteine 91-cysteine 135, cysteine 118-cysteine 146, cysteine 153-cysteine 197, cysteine 180-cysteine 208, cysteine 213-cysteine 255, cysteine 241-cysteine 267, cysteine 274-cysteine 316, cysteine 302-cysteine 327, cysteine 336-cysteine 378, cysteine 364-cysteine 389, cysteine 396-cysteine 439, cysteine 425-cysteine 450, cysteine 454-cysteine 505, cysteine 486-cysteine 515, cysteine 524-cysteine 567, cysteine 553-cysteine 578, cysteine 582-cysteine 636, and cysteine 616-cysteine 646. An N-linked (GlcNAc...) asparagine glycan is attached at asparagine 162. An N-linked (GlcNAc...) asparagine glycan is attached at asparagine 545. Positions 617 to 619 (RGD) match the Cell attachment site motif.

As to quaternary structure, tetramer of two A chains (F13A1) and two B (F13B) chains.

The protein resides in the secreted. Its function is as follows. The B chain of factor XIII is not catalytically active, but is thought to stabilize the A subunits and regulate the rate of transglutaminase formation by thrombin. This chain is Coagulation factor XIII B chain (F13B), found in Homo sapiens (Human).